Here is a 564-residue protein sequence, read N- to C-terminus: MFS-type transporter kojT (564 aa).

The N-linked (GlcNAc...) asparagine glycan is linked to N113. Transmembrane regions (helical) follow at residues W120 to D140, S159 to F179, P187 to P207, F217 to I237, V249 to G269, W278 to V298, I353 to L373, G389 to V409, L437 to T457, I462 to F482, A500 to I520, and W530 to Y550.

Belongs to the major facilitator superfamily.

It localises to the cell membrane. Its function is as follows. MFS-type transporter; part of the gene cluster that mediates the biosynthesis of 5-hydroxy-2-hydroxymethyl-1,4-pyrone, also know as kojic acid, a by-product in the fermentation process of malting rice that acts as a chelation agent. Involved in the seretion of kojic acid. The polypeptide is MFS-type transporter kojT (Aspergillus flavus (strain ATCC 200026 / FGSC A1120 / IAM 13836 / NRRL 3357 / JCM 12722 / SRRC 167)).